The following is an 83-amino-acid chain: Transmembrane protein EP84R (83 aa).

Transmembrane regions (helical) follow at residues 31–51 and 59–79; these read IIGV…IIIL and AGSI…FLIY.

It belongs to the asfivirus EP84R family.

It is found in the virion membrane. This chain is Transmembrane protein EP84R, found in Ornithodoros (relapsing fever ticks).